The primary structure comprises 337 residues: Anthranilate phosphoribosyltransferase (337 aa).

Residues G79, 82 to 83 (GD), T87, 89 to 92 (NVST), 107 to 115 (KHGNRSVSS), and S119 contribute to the 5-phospho-alpha-D-ribose 1-diphosphate site. Residue G79 coordinates anthranilate. S91 provides a ligand contact to Mg(2+). N110 contacts anthranilate. R165 serves as a coordination point for anthranilate. D223 and E224 together coordinate Mg(2+).

The protein belongs to the anthranilate phosphoribosyltransferase family. Homodimer. Mg(2+) is required as a cofactor.

The enzyme catalyses N-(5-phospho-beta-D-ribosyl)anthranilate + diphosphate = 5-phospho-alpha-D-ribose 1-diphosphate + anthranilate. It functions in the pathway amino-acid biosynthesis; L-tryptophan biosynthesis; L-tryptophan from chorismate: step 2/5. Catalyzes the transfer of the phosphoribosyl group of 5-phosphorylribose-1-pyrophosphate (PRPP) to anthranilate to yield N-(5'-phosphoribosyl)-anthranilate (PRA). In Aeromonas salmonicida (strain A449), this protein is Anthranilate phosphoribosyltransferase.